The following is a 495-amino-acid chain: Alpha-1B-glycoprotein (495 aa).

Residues 1 to 21 form the signal peptide; the sequence is MSMLVVFLLLWGVTWGPVTEA. Ig-like V-type domains follow at residues 22 to 113, 114 to 206, 207 to 299, 300 to 397, and 398 to 495; these read AIFY…LTGP, KSLP…ELAA, PPPP…PVEL, ILSD…LHVD, and GPPP…VAES. Asn-44 carries N-linked (GlcNAc...) (complex) asparagine glycosylation. 5 disulfide bridges follow: Cys-49–Cys-93, Cys-139–Cys-182, Cys-232–Cys-279, Cys-325–Cys-374, and Cys-423–Cys-470. Residue Asn-179 is glycosylated (N-linked (GlcNAc...) asparagine). Asn-363 and Asn-371 each carry an N-linked (GlcNAc...) asparagine glycan.

Interacts with CRISP3. As to expression, plasma.

Its subcellular location is the secreted. This Homo sapiens (Human) protein is Alpha-1B-glycoprotein (A1BG).